A 155-amino-acid polypeptide reads, in one-letter code: 6,7-dimethyl-8-ribityllumazine synthase (155 aa).

5-amino-6-(D-ribitylamino)uracil is bound by residues F23, 57–59, and 81–83; these read AFE and AVI. 86–87 provides a ligand contact to (2S)-2-hydroxy-3-oxobutyl phosphate; sequence AT. H89 acts as the Proton donor in catalysis. F114 is a binding site for 5-amino-6-(D-ribitylamino)uracil. (2S)-2-hydroxy-3-oxobutyl phosphate is bound at residue R128.

It belongs to the DMRL synthase family.

It catalyses the reaction (2S)-2-hydroxy-3-oxobutyl phosphate + 5-amino-6-(D-ribitylamino)uracil = 6,7-dimethyl-8-(1-D-ribityl)lumazine + phosphate + 2 H2O + H(+). Its pathway is cofactor biosynthesis; riboflavin biosynthesis; riboflavin from 2-hydroxy-3-oxobutyl phosphate and 5-amino-6-(D-ribitylamino)uracil: step 1/2. Functionally, catalyzes the formation of 6,7-dimethyl-8-ribityllumazine by condensation of 5-amino-6-(D-ribitylamino)uracil with 3,4-dihydroxy-2-butanone 4-phosphate. This is the penultimate step in the biosynthesis of riboflavin. This chain is 6,7-dimethyl-8-ribityllumazine synthase, found in Geotalea daltonii (strain DSM 22248 / JCM 15807 / FRC-32) (Geobacter daltonii).